The primary structure comprises 802 residues: Ribosomal protein S6 kinase alpha-5 (802 aa).

Positions 1–22 (MEEEGGSSGGAAGTSADGGDGG) are enriched in gly residues. Residues 1–23 (MEEEGGSSGGAAGTSADGGDGGE) are disordered. Residues 49-318 (FELLKVLGTG…ADEIKEHLFF (270 aa)) form the Protein kinase 1 domain. ATP-binding positions include 55–63 (LGTGAYGKV) and Lys81. The active-site Proton acceptor is the Asp177. Phosphoserine; by autocatalysis is present on Ser212. Residues 319 to 387 (QKINWDDLAA…VAPSILFKRN (69 aa)) form the AGC-kinase C-terminal domain. The residue at position 360 (Ser360) is a Phosphoserine; by MAPK1, MAPK3 and MAPK14. A phosphoserine; by autocatalysis mark is found at Ser376 and Ser381. One can recognise a Protein kinase 2 domain in the interval 426–687 (DLKDKPLGEG…MSGLRYNEWL (262 aa)). ATP is bound by residues 432-440 (LGEGSFSIC) and Lys455. Residue Asp544 is the Proton acceptor of the active site. Thr581 bears the Phosphothreonine; by MAPK1, MAPK3 and MAPK14 mark. Phosphoserine is present on residues Ser647, Ser657, Ser691, and Ser695. The residue at position 700 (Thr700) is a Phosphothreonine; by MAPK1, MAPK3 and MAPK14. Residues 741–802 (AKRRKMKKTS…TLFQFSDSVA (62 aa)) are disordered. The segment covering 749–779 (TSTSTETRSSSSESSHSSSSHSHGKTTPTKT) has biased composition (low complexity). Residues Ser750, Ser752, and Ser758 each carry the phosphoserine; by autocatalysis modification. Polar residues predominate over residues 780-802 (LQPSNPADSNNPETLFQFSDSVA). Ser798 carries the phosphoserine modification.

Belongs to the protein kinase superfamily. AGC Ser/Thr protein kinase family. S6 kinase subfamily. Forms a complex with either MAPK1/ERK2 or MAPK3/ERK1 in quiescent cells which transiently dissociates following mitogenic stimulation. Also associates with MAPK14/p38-alpha. Activated RPS6KA5 associates with and phosphorylates the NF-kappa-B p65 subunit RELA. Interacts with CREBBP and EP300. The cofactor is Mg(2+). Post-translationally, ser-376 and Thr-581 phosphorylation is required for kinase activity. Ser-376 and Ser-212 are autophosphorylated by the C-terminal kinase domain, and their phosphorylation is essential for the catalytic activity of the N-terminal kinase domain. Phosphorylated at Ser-360, Thr-581 and Thr-700 by MAPK1/ERK2, MAPK3/ERK1 and MAPK14/p38-alpha. Autophosphorylated at Ser-750, Ser-752 and Ser-758 by the N-terminal kinase domain. In terms of processing, ubiquitinated.

Its subcellular location is the nucleus. It carries out the reaction L-seryl-[protein] + ATP = O-phospho-L-seryl-[protein] + ADP + H(+). It catalyses the reaction L-threonyl-[protein] + ATP = O-phospho-L-threonyl-[protein] + ADP + H(+). With respect to regulation, activated by phosphorylation at Ser-360, Thr-581 and Thr-700 by MAPK1/ERK2, MAPK3/ERK1 and MAPK14/p38-alpha, and by further autophosphorylation of Ser-212, Ser-376 and Ser-381 by the activated C-terminal kinase domain. The active N-terminal kinase domain finally phosphorylates downstream substrates, as well as Ser-750, Ser-752 and Ser-758 in its own C-terminal region. Functionally, serine/threonine-protein kinase that is required for the mitogen or stress-induced phosphorylation of the transcription factors CREB1 and ATF1 and for the regulation of the transcription factors RELA, STAT3 and ETV1/ER81, and that contributes to gene activation by histone phosphorylation and functions in the regulation of inflammatory genes. Phosphorylates CREB1 and ATF1 in response to mitogenic or stress stimuli such as UV-C irradiation, epidermal growth factor (EGF) and anisomycin. Plays an essential role in the control of RELA transcriptional activity in response to TNF and upon glucocorticoid, associates in the cytoplasm with the glucocorticoid receptor NR3C1 and contributes to RELA inhibition and repression of inflammatory gene expression. In skeletal myoblasts is required for phosphorylation of RELA at 'Ser-276' during oxidative stress. In erythropoietin-stimulated cells, is necessary for the 'Ser-727' phosphorylation of STAT3 and regulation of its transcriptional potential. Phosphorylates ETV1/ER81 at 'Ser-191' and 'Ser-216', and thereby regulates its ability to stimulate transcription, which may be important during development and breast tumor formation. Directly represses transcription via phosphorylation of 'Ser-1' of histone H2A. Phosphorylates 'Ser-10' of histone H3 in response to mitogenics, stress stimuli and EGF, which results in the transcriptional activation of several immediate early genes, including proto-oncogenes c-fos/FOS and c-jun/JUN. May also phosphorylate 'Ser-28' of histone H3. Mediates the mitogen- and stress-induced phosphorylation of high mobility group protein 1 (HMGN1/HMG14). In lipopolysaccharide-stimulated primary macrophages, acts downstream of the Toll-like receptor TLR4 to limit the production of pro-inflammatory cytokines. Functions probably by inducing transcription of the MAP kinase phosphatase DUSP1 and the anti-inflammatory cytokine interleukin 10 (IL10), via CREB1 and ATF1 transcription factors. Plays a role in neuronal cell death by mediating the downstream effects of excitotoxic injury. Phosphorylates TRIM7 at 'Ser-107' in response to growth factor signaling via the MEK/ERK pathway, thereby stimulating its ubiquitin ligase activity. This is Ribosomal protein S6 kinase alpha-5 (RPS6KA5) from Pongo abelii (Sumatran orangutan).